A 240-amino-acid chain; its full sequence is Uridylate kinase (240 aa).

13 to 16 (KLSG) is an ATP binding site. Residues 21–26 (GDKGFG) form an involved in allosteric activation by GTP region. Gly55 is a binding site for UMP. Gly56 and Arg60 together coordinate ATP. UMP contacts are provided by residues Asp75 and 136–143 (IGNPYFST). Asn164, Tyr170, and Asp173 together coordinate ATP.

The protein belongs to the UMP kinase family. Homohexamer.

It is found in the cytoplasm. The catalysed reaction is UMP + ATP = UDP + ADP. Its pathway is pyrimidine metabolism; CTP biosynthesis via de novo pathway; UDP from UMP (UMPK route): step 1/1. Its activity is regulated as follows. Allosterically activated by GTP. Inhibited by UTP. Catalyzes the reversible phosphorylation of UMP to UDP. The chain is Uridylate kinase from Staphylococcus haemolyticus (strain JCSC1435).